A 447-amino-acid polypeptide reads, in one-letter code: N-succinylarginine dihydrolase (447 aa).

Substrate contacts are provided by residues 19–28, N110, and 137–138; these read AGLSFGNEAS and HR. The active site involves E174. R212 is a substrate binding site. H248 is an active-site residue. Residues D250 and N359 each contribute to the substrate site. C365 acts as the Nucleophile in catalysis.

This sequence belongs to the succinylarginine dihydrolase family. Homodimer.

The enzyme catalyses N(2)-succinyl-L-arginine + 2 H2O + 2 H(+) = N(2)-succinyl-L-ornithine + 2 NH4(+) + CO2. It participates in amino-acid degradation; L-arginine degradation via AST pathway; L-glutamate and succinate from L-arginine: step 2/5. Catalyzes the hydrolysis of N(2)-succinylarginine into N(2)-succinylornithine, ammonia and CO(2). This chain is N-succinylarginine dihydrolase, found in Escherichia coli O1:K1 / APEC.